Here is an 87-residue protein sequence, read N- to C-terminus: Phosphoribosyl-ATP pyrophosphatase (87 aa).

It belongs to the PRA-PH family.

The protein localises to the cytoplasm. The catalysed reaction is 1-(5-phospho-beta-D-ribosyl)-ATP + H2O = 1-(5-phospho-beta-D-ribosyl)-5'-AMP + diphosphate + H(+). It participates in amino-acid biosynthesis; L-histidine biosynthesis; L-histidine from 5-phospho-alpha-D-ribose 1-diphosphate: step 2/9. This chain is Phosphoribosyl-ATP pyrophosphatase, found in Arthrobacter sp. (strain FB24).